We begin with the raw amino-acid sequence, 230 residues long: 7-cyano-7-deazaguanine synthase (230 aa).

Residue 9–19 coordinates ATP; sequence YSGGLDSTTCL. 4 residues coordinate Zn(2+): C190, C200, C203, and C206.

The protein belongs to the QueC family. It depends on Zn(2+) as a cofactor.

The catalysed reaction is 7-carboxy-7-deazaguanine + NH4(+) + ATP = 7-cyano-7-deazaguanine + ADP + phosphate + H2O + H(+). Its pathway is purine metabolism; 7-cyano-7-deazaguanine biosynthesis. Catalyzes the ATP-dependent conversion of 7-carboxy-7-deazaguanine (CDG) to 7-cyano-7-deazaguanine (preQ(0)). This Syntrophotalea carbinolica (strain DSM 2380 / NBRC 103641 / GraBd1) (Pelobacter carbinolicus) protein is 7-cyano-7-deazaguanine synthase.